The sequence spans 647 residues: 1-phosphatidylinositol 4,5-bisphosphate phosphodiesterase zeta-1 (647 aa).

An EF-hand domain is found at 43–78 (CHFAHVKHIFKENDRQNQGRITIEEFRAIYRCIVHR). The region spanning 163–307 (QDMNHPLSDY…LKFKILVKNR (145 aa)) is the PI-PLC X-box domain. Residues His-178 and His-223 contribute to the active site. Residues 386-502 (LSDLVIYTKA…GYILKPDILR (117 aa)) enclose the PI-PLC Y-box domain. The C2 domain maps to 502–627 (RDTTLGFNPN…KGYRRVPLFS (126 aa)).

Interacts via its C2 domain with PtdIns(3)P and, to a lesser extent, PtdIns(5)P in vitro. It depends on Ca(2+) as a cofactor. Highly expressed in postpuberal testis, where expression is sperm cell-specific. Also expressed in brain of both sexes.

It localises to the nucleus. The protein resides in the cytoplasm. Its subcellular location is the perinuclear region. The enzyme catalyses a 1,2-diacyl-sn-glycero-3-phospho-(1D-myo-inositol-4,5-bisphosphate) + H2O = 1D-myo-inositol 1,4,5-trisphosphate + a 1,2-diacyl-sn-glycerol + H(+). In terms of biological role, the production of the second messenger molecules diacylglycerol (DAG) and inositol 1,4,5-trisphosphate (IP3) is mediated by activated phosphatidylinositol-specific phospholipase C enzymes. In vitro, hydrolyzes PtdIns(4,5)P2 in a Ca(2+)-dependent manner. Triggers intracellular Ca(2+) oscillations in oocytes solely during M phase and is involved in inducing oocyte activation and initiating embryonic development up to the blastocyst stage. Is therefore a strong candidate for the egg-activating soluble sperm factor that is transferred from the sperm into the egg cytoplasm following gamete membrane fusion. May exert an inhibitory effect on phospholipase-C-coupled processes that depend on calcium ions and protein kinase C, including CFTR trafficking and function. This chain is 1-phosphatidylinositol 4,5-bisphosphate phosphodiesterase zeta-1, found in Mus musculus (Mouse).